Reading from the N-terminus, the 87-residue chain is Large ribosomal subunit protein bL31B (87 aa).

It belongs to the bacterial ribosomal protein bL31 family. Type B subfamily. Part of the 50S ribosomal subunit.

The protein is Large ribosomal subunit protein bL31B of Pseudomonas aeruginosa (strain LESB58).